The primary structure comprises 351 residues: NADP-dependent isopropanol dehydrogenase (351 aa).

Residues cysteine 37, histidine 59, glutamate 60, and aspartate 150 each coordinate Zn(2+). NADP(+) is bound by residues 175–178 (IGAV), 198–200 (GSR), tyrosine 218, 265–267 (INY), and lysine 340.

It belongs to the zinc-containing alcohol dehydrogenase family. As to quaternary structure, homotetramer. Requires Zn(2+) as cofactor.

The catalysed reaction is propan-2-ol + NADP(+) = acetone + NADPH + H(+). Alcohol dehydrogenase with a preference for medium chain secondary alcohols, such as 2-butanol and isopropanol. Has very low activity with primary alcohols, such as ethanol. Under physiological conditions, the enzyme reduces aldehydes and 2-ketones to produce secondary alcohols. Is active with acetaldehyde and propionaldehyde. The protein is NADP-dependent isopropanol dehydrogenase (adh) of Clostridium beijerinckii (Clostridium MP).